The sequence spans 493 residues: Dipeptide and tripeptide permease B (493 aa).

The Cytoplasmic portion of the chain corresponds to 1–27 (MERSTPTGLLQQPKPFFMIFFVELWER). The helical transmembrane segment at 28-48 (FGYYGVQGILAVFFVQQLGFS) threads the bilayer. The Periplasmic portion of the chain corresponds to 49–52 (QEQA). A helical transmembrane segment spans residues 53 to 73 (FVTFGAFAALVYGLISIGGYV). Over 74–82 (GDHLLGTKR) the chain is Cytoplasmic. Residues 83-103 (TMVLGAVVLAAGYFATGLSLY) traverse the membrane as a helical segment. Topologically, residues 104 to 106 (QPN) are periplasmic. A helical membrane pass occupies residues 107–127 (LIFFALGTIAVGNGLFKANPA). At 128 to 146 (SLLSKCYPPKDPRLDGAFT) the chain is on the cytoplasmic side. The chain crosses the membrane as a helical span at residues 147-167 (LFYMSINIGSLLSLSLAPVIA). Over 168–169 (ER) the chain is Periplasmic. Residues 170–190 (FGYTVTYYLCGIGLIFALLVY) form a helical membrane-spanning segment. Residues 191–212 (FCCRHMVRHIGSEPDTKPLNWR) are Cytoplasmic-facing. 2 helical membrane-spanning segments follow: residues 213-233 (NLLL…WLMN) and 234-254 (HVFI…FIFF). The Cytoplasmic segment spans residues 255-267 (REASKQDRLGRNK). Residues 268 to 288 (MFVAFILMIEAIVFYVLYAQM) traverse the membrane as a helical segment. At 289 to 311 (PTSLNFFAINNVHHEILGFSINP) the chain is on the periplasmic side. Residues 312 to 332 (VSFQALNPFWVVVASPILASI) traverse the membrane as a helical segment. At 333-350 (YTRLGSQNRDLSMPAKFT) the chain is on the cytoplasmic side. The chain crosses the membrane as a helical span at residues 351–371 (LGMFLCSLGFLTAAAAGMWFA). Over 372–379 (DAQGLTSP) the chain is Periplasmic. The chain crosses the membrane as a helical span at residues 380–400 (WFIVLVYLFQSLGELMISALG). The Cytoplasmic segment spans residues 401–424 (LAMVAALVPQYLMGFILGMWFLTQ). The helical transmembrane segment at 425–445 (AASFLIGGYVATFTATPEGMT) threads the bilayer. Residues 446–456 (DPLETLPIYTD) lie on the Periplasmic side of the membrane. A helical transmembrane segment spans residues 457 to 477 (VFGKIGMVTLVIALVMALLIP). The Cytoplasmic portion of the chain corresponds to 478-493 (WLNRMINSSAAEDAVA).

Belongs to the major facilitator superfamily. Proton-dependent oligopeptide transporter (POT/PTR) (TC 2.A.17) family. DtpB subfamily.

The protein localises to the cell inner membrane. Proton-dependent permease that transports di- and tripeptides. The polypeptide is Dipeptide and tripeptide permease B (Yersinia enterocolitica serotype O:8 / biotype 1B (strain NCTC 13174 / 8081)).